We begin with the raw amino-acid sequence, 95 residues long: Large ribosomal subunit protein uL23 (95 aa).

The protein belongs to the universal ribosomal protein uL23 family. In terms of assembly, part of the 50S ribosomal subunit. Contacts protein L29, and trigger factor when it is bound to the ribosome.

In terms of biological role, one of the early assembly proteins it binds 23S rRNA. One of the proteins that surrounds the polypeptide exit tunnel on the outside of the ribosome. Forms the main docking site for trigger factor binding to the ribosome. In Geobacillus kaustophilus (strain HTA426), this protein is Large ribosomal subunit protein uL23.